The following is a 348-amino-acid chain: D-erythrose-4-phosphate dehydrogenase (348 aa).

NAD(+)-binding positions include 12-13 (RI) and Arg81. Substrate is bound by residues 154-156 (SCT), Arg200, 213-214 (TK), and Arg236. Cys155 serves as the catalytic Nucleophile. Asn318 is an NAD(+) binding site.

The protein belongs to the glyceraldehyde-3-phosphate dehydrogenase family. Epd subfamily. In terms of assembly, homotetramer.

It localises to the cytoplasm. The catalysed reaction is D-erythrose 4-phosphate + NAD(+) + H2O = 4-phospho-D-erythronate + NADH + 2 H(+). Its pathway is cofactor biosynthesis; pyridoxine 5'-phosphate biosynthesis; pyridoxine 5'-phosphate from D-erythrose 4-phosphate: step 1/5. In terms of biological role, catalyzes the NAD-dependent conversion of D-erythrose 4-phosphate to 4-phosphoerythronate. In Salmonella dublin (strain CT_02021853), this protein is D-erythrose-4-phosphate dehydrogenase.